The primary structure comprises 335 residues: SLAM family member 7 (335 aa).

A signal peptide spans 1–22 (MAGSPTCLTLIYILWQLTGSAA). In terms of domain architecture, Ig-like V-type spans 23-124 (SGPVKELVGS…PSTQEYVLHV (102 aa)). Over 23-226 (SGPVKELVGS…GAADDPDSSM (204 aa)) the chain is Extracellular. 6 N-linked (GlcNAc...) asparagine glycosylation sites follow: Asn-98, Asn-142, Asn-148, Asn-172, Asn-176, and Asn-204. The 76-residue stretch at 131-206 (PKVTMGLQSN…ARNPVSRNFS (76 aa)) folds into the Ig-like C2-type domain. 2 disulfide bridges follow: Cys-145-Cys-215 and Cys-151-Cys-195. A helical membrane pass occupies residues 227 to 247 (VLLCLLLVPLLLSLFVLGLFL). Over 248–335 (WFLKRERQEE…PRLFAYENVI (88 aa)) the chain is Cytoplasmic. Positions 278 to 296 (SGENTEYDTIPHTNRTILK) are interaction with FYN when phosphorylated at Tyr-284. The ITSM motif lies at 302–307 (TVYSTV).

As to quaternary structure, isoform 1 binds to SH2D1A when its cytoplasmic tail is phosphorylated in the presence of FYN (in vitro); low affinity binding, the physiological relevance of the interaction is questioned. Interacts with SH2D1B; in NK cells. Interacts (via ITSM phosphorylated on Tyr-302) with SH2D1B, PTPN6/SHP-1, PTPN11/SHP-2, INPP5D/SHIP1, CSK and FYN. As to expression, expressed in spleen, lymph node, peripheral blood leukocytes, bone marrow, small intestine, stomach, appendix, lung and trachea. Expression was detected in NK cells, activated B-cells, NK-cell line but not in promyelocytic, B-, or T-cell lines. Expressed in monocytes. Isoform 3 is expressed at much lower level than isoform 1.

It localises to the membrane. Self-ligand receptor of the signaling lymphocytic activation molecule (SLAM) family. SLAM receptors triggered by homo- or heterotypic cell-cell interactions are modulating the activation and differentiation of a wide variety of immune cells and thus are involved in the regulation and interconnection of both innate and adaptive immune response. Activities are controlled by presence or absence of small cytoplasmic adapter proteins, SH2D1A/SAP and/or SH2D1B/EAT-2. Isoform 1 mediates NK cell activation through a SH2D1A-independent extracellular signal-regulated ERK-mediated pathway. Positively regulates NK cell functions by a mechanism dependent on phosphorylated SH2D1B. Downstream signaling implicates PLCG1, PLCG2 and PI3K. In addition to heterotypic NK cells-target cells interactions also homotypic interactions between NK cells may contribute to activation. However, in the absence of SH2D1B, inhibits NK cell function. Also acts inhibitory in T-cells. May play a role in lymphocyte adhesion. In LPS-activated monocytes negatively regulates production of pro-inflammatory cytokines. Its function is as follows. Isoform 3 does not mediate any NK cell activation. The polypeptide is SLAM family member 7 (SLAMF7) (Homo sapiens (Human)).